Consider the following 134-residue polypeptide: uncharacterized protein (134 aa).

This sequence to E.coli YbcV and YdfO.

This is an uncharacterized protein from Escherichia coli (strain K12).